A 104-amino-acid polypeptide reads, in one-letter code: DNA-directed RNA polymerase subunit Rpo13 (104 aa).

Disordered stretches follow at residues 1-34 (MVSGMSTEEEKEGTNDEEVSEEREVEETSEEEFP) and 76-104 (EKRDSRRKAKKAASKKVKKTKKKEKSVEG). The span at 7–31 (TEEEKEGTNDEEVSEEREVEETSEE) shows a compositional bias: acidic residues. Glu-32 is a binding site for DNA. A compositionally biased stretch (basic residues) spans 80 to 104 (SRRKAKKAASKKVKKTKKKEKSVEG). The interval 81 to 104 (RRKAKKAASKKVKKTKKKEKSVEG) is required to bind DNA.

This sequence belongs to the archaeal Rpo13 RNA polymerase subunit family. In terms of assembly, part of the 13-subunit RNA polymerase complex. Rpo1N and Rpo5 form a cleft which docks Rpo13. Forms predominantly dimers in solution, although monomers and trimers can also be seen. Found associated with RNAP but also as a homodimer pool in the cytoplasm in vivo.

It is found in the cytoplasm. The catalysed reaction is RNA(n) + a ribonucleoside 5'-triphosphate = RNA(n+1) + diphosphate. DNA-dependent RNA polymerase (RNAP) catalyzes the transcription of DNA into RNA using the four ribonucleoside triphosphates as substrates. A molten-globule protein, it binds dsDNA in the RNAP, in vitro binds dsDNA but not ssDNA. Its position in RNAP implies it functions in both transcription initiation and elongation. The sequence is that of DNA-directed RNA polymerase subunit Rpo13 from Saccharolobus shibatae (strain ATCC 51178 / DSM 5389 / JCM 8931 / NBRC 15437 / B12) (Sulfolobus shibatae).